The chain runs to 275 residues: Dermonecrotic toxin LamSicTox-alphaIV1iii (275 aa).

His5 is a catalytic residue. Mg(2+) is bound by residues Glu25 and Asp27. Catalysis depends on His41, which acts as the Nucleophile. 2 cysteine pairs are disulfide-bonded: Cys45–Cys51 and Cys47–Cys192. Asp85 is a Mg(2+) binding site.

The protein belongs to the arthropod phospholipase D family. Class II subfamily. The cofactor is Mg(2+). Expressed by the venom gland.

The protein localises to the secreted. It catalyses the reaction an N-(acyl)-sphingosylphosphocholine = an N-(acyl)-sphingosyl-1,3-cyclic phosphate + choline. The enzyme catalyses an N-(acyl)-sphingosylphosphoethanolamine = an N-(acyl)-sphingosyl-1,3-cyclic phosphate + ethanolamine. It carries out the reaction a 1-acyl-sn-glycero-3-phosphocholine = a 1-acyl-sn-glycero-2,3-cyclic phosphate + choline. The catalysed reaction is a 1-acyl-sn-glycero-3-phosphoethanolamine = a 1-acyl-sn-glycero-2,3-cyclic phosphate + ethanolamine. Its function is as follows. Dermonecrotic toxins cleave the phosphodiester linkage between the phosphate and headgroup of certain phospholipids (sphingolipid and lysolipid substrates), forming an alcohol (often choline) and a cyclic phosphate. This toxin acts on sphingomyelin (SM). It may also act on ceramide phosphoethanolamine (CPE), lysophosphatidylcholine (LPC) and lysophosphatidylethanolamine (LPE), but not on lysophosphatidylserine (LPS), and lysophosphatidylglycerol (LPG). It acts by transphosphatidylation, releasing exclusively cyclic phosphate products as second products. Induces dermonecrosis, hemolysis, increased vascular permeability, edema, inflammatory response, and platelet aggregation. The sequence is that of Dermonecrotic toxin LamSicTox-alphaIV1iii from Loxosceles amazonica (Recluse spider).